A 389-amino-acid chain; its full sequence is Aminomethyltransferase (389 aa).

The protein belongs to the GcvT family. As to quaternary structure, the glycine cleavage system is composed of four proteins: P, T, L and H.

It catalyses the reaction N(6)-[(R)-S(8)-aminomethyldihydrolipoyl]-L-lysyl-[protein] + (6S)-5,6,7,8-tetrahydrofolate = N(6)-[(R)-dihydrolipoyl]-L-lysyl-[protein] + (6R)-5,10-methylene-5,6,7,8-tetrahydrofolate + NH4(+). In terms of biological role, the glycine cleavage system catalyzes the degradation of glycine. This Corynebacterium jeikeium (strain K411) protein is Aminomethyltransferase.